We begin with the raw amino-acid sequence, 271 residues long: Proteasome inhibitor PI31 subunit (271 aa).

N-acetylalanine is present on alanine 2. The interval 2–150 is important for homodimerization and interaction with FBXO7; that stretch reads AGLEVLFASA…PIHEQWEKVR (149 aa). 2 positions are modified to phosphoserine: serine 153 and serine 189. Omega-N-methylarginine is present on arginine 205. Arginine 219 carries the post-translational modification Asymmetric dimethylarginine. Positions 221 to 271 are disordered; the sequence is LIDPSSGLPNRLPPGAVPPGARFDPFGPIGTSPSGPNPDHLPPPGYDDMYL. The residue at position 231 (arginine 231) is an Omega-N-methylarginine. The residue at position 252 (serine 252) is a Phosphoserine. The span at 255–265 shows a compositional bias: pro residues; the sequence is GPNPDHLPPPG.

This sequence belongs to the proteasome inhibitor PI31 family. In terms of assembly, monomer and homodimer. Interacts with FBXO7.

The protein localises to the cytoplasm. The protein resides in the endoplasmic reticulum. Functionally, plays an important role in control of proteasome function. Inhibits the hydrolysis of protein and peptide substrates by the 20S proteasome. Also inhibits the activation of the proteasome by the proteasome regulatory proteins PA700 and PA28. This is Proteasome inhibitor PI31 subunit (Psmf1) from Rattus norvegicus (Rat).